We begin with the raw amino-acid sequence, 470 residues long: Uronate isomerase (470 aa).

It belongs to the metallo-dependent hydrolases superfamily. Uronate isomerase family.

The catalysed reaction is D-glucuronate = D-fructuronate. The enzyme catalyses aldehydo-D-galacturonate = keto-D-tagaturonate. The protein operates within carbohydrate metabolism; pentose and glucuronate interconversion. In Shigella boydii serotype 18 (strain CDC 3083-94 / BS512), this protein is Uronate isomerase.